The primary structure comprises 516 residues: 2-isopropylmalate synthase (516 aa).

One can recognise a Pyruvate carboxyltransferase domain in the interval 8–270 (IYIFDTTLRD…YTGIKTESIY (263 aa)). Mn(2+) is bound by residues Asp17, His205, His207, and Asn241. The regulatory domain stretch occupies residues 394–516 (KLIYLNVVSG…DAGKIKSEYE (123 aa)).

The protein belongs to the alpha-IPM synthase/homocitrate synthase family. LeuA type 1 subfamily. In terms of assembly, homodimer. Requires Mn(2+) as cofactor.

It localises to the cytoplasm. The enzyme catalyses 3-methyl-2-oxobutanoate + acetyl-CoA + H2O = (2S)-2-isopropylmalate + CoA + H(+). The protein operates within amino-acid biosynthesis; L-leucine biosynthesis; L-leucine from 3-methyl-2-oxobutanoate: step 1/4. Its function is as follows. Catalyzes the condensation of the acetyl group of acetyl-CoA with 3-methyl-2-oxobutanoate (2-ketoisovalerate) to form 3-carboxy-3-hydroxy-4-methylpentanoate (2-isopropylmalate). The sequence is that of 2-isopropylmalate synthase from Syntrophus aciditrophicus (strain SB).